The sequence spans 327 residues: Phenylalanine--tRNA ligase alpha subunit (327 aa).

Position 252 (glutamate 252) interacts with Mg(2+).

Belongs to the class-II aminoacyl-tRNA synthetase family. Phe-tRNA synthetase alpha subunit type 1 subfamily. As to quaternary structure, tetramer of two alpha and two beta subunits. Mg(2+) serves as cofactor.

The protein localises to the cytoplasm. It carries out the reaction tRNA(Phe) + L-phenylalanine + ATP = L-phenylalanyl-tRNA(Phe) + AMP + diphosphate + H(+). The protein is Phenylalanine--tRNA ligase alpha subunit of Sodalis glossinidius (strain morsitans).